We begin with the raw amino-acid sequence, 792 residues long: Endonuclease MutS2 (792 aa).

An ATP-binding site is contributed by 335–342 (GPNTGGKT). In terms of domain architecture, Smr spans 717 to 792 (VDLRGLNLEE…GAGVTIVKLK (76 aa)).

The protein belongs to the DNA mismatch repair MutS family. MutS2 subfamily. As to quaternary structure, homodimer. Binds to stalled ribosomes, contacting rRNA.

Functionally, endonuclease that is involved in the suppression of homologous recombination and thus may have a key role in the control of bacterial genetic diversity. Acts as a ribosome collision sensor, splitting the ribosome into its 2 subunits. Detects stalled/collided 70S ribosomes which it binds and splits by an ATP-hydrolysis driven conformational change. Acts upstream of the ribosome quality control system (RQC), a ribosome-associated complex that mediates the extraction of incompletely synthesized nascent chains from stalled ribosomes and their subsequent degradation. Probably generates substrates for RQC. This Clostridioides difficile (strain 630) (Peptoclostridium difficile) protein is Endonuclease MutS2.